The chain runs to 131 residues: Arsenate reductase 1 (131 aa).

Active-site nucleophile residues include Cys10, Cys82, and Cys89. 2 cysteine pairs are disulfide-bonded: Cys10–Cys82 and Cys82–Cys89.

This sequence belongs to the low molecular weight phosphotyrosine protein phosphatase family. Thioredoxin-coupled ArsC subfamily.

It is found in the cytoplasm. It catalyses the reaction arsenate + [thioredoxin]-dithiol + H(+) = arsenite + [thioredoxin]-disulfide + H2O. Catalyzes the reduction of arsenate [As(V)] to arsenite [As(III)]. The sequence is that of Arsenate reductase 1 from Staphylococcus saprophyticus subsp. saprophyticus (strain ATCC 15305 / DSM 20229 / NCIMB 8711 / NCTC 7292 / S-41).